Consider the following 185-residue polypeptide: MLQAIYNETKDLMQKSIQALNRDFSTLRSAKVSVNILDHIKVDYYGTPTALNQVGSVMSLDATTLQISPWEKNLLKEIERSIQEANIGVNPNNDGETIKLFFPPMTTEQRKLIAKDAKAMGEKAKVAVRNTRQDANNKVKKLEKDKEISEDESKKAQEQIQKITDEAIKKIDESVKNKEDAILKV.

The interval 128 to 158 is disordered; the sequence is VRNTRQDANNKVKKLEKDKEISEDESKKAQE.

It belongs to the RRF family.

It localises to the cytoplasm. Functionally, responsible for the release of ribosomes from messenger RNA at the termination of protein biosynthesis. May increase the efficiency of translation by recycling ribosomes from one round of translation to another. This chain is Ribosome-recycling factor, found in Helicobacter pylori (strain J99 / ATCC 700824) (Campylobacter pylori J99).